The following is a 778-amino-acid chain: Endonuclease MutS2 (778 aa).

328–335 (GPNTGGKT) provides a ligand contact to ATP. Residues 702 to 777 (LDLRGKRYEE…GSGATIVTFK (76 aa)) form the Smr domain.

The protein belongs to the DNA mismatch repair MutS family. MutS2 subfamily. As to quaternary structure, homodimer. Binds to stalled ribosomes, contacting rRNA.

Functionally, endonuclease that is involved in the suppression of homologous recombination and thus may have a key role in the control of bacterial genetic diversity. Acts as a ribosome collision sensor, splitting the ribosome into its 2 subunits. Detects stalled/collided 70S ribosomes which it binds and splits by an ATP-hydrolysis driven conformational change. Acts upstream of the ribosome quality control system (RQC), a ribosome-associated complex that mediates the extraction of incompletely synthesized nascent chains from stalled ribosomes and their subsequent degradation. Probably generates substrates for RQC. The protein is Endonuclease MutS2 of Streptococcus pneumoniae (strain Hungary19A-6).